A 140-amino-acid polypeptide reads, in one-letter code: ATP synthase epsilon chain (140 aa).

Belongs to the ATPase epsilon chain family. In terms of assembly, F-type ATPases have 2 components, CF(1) - the catalytic core - and CF(0) - the membrane proton channel. CF(1) has five subunits: alpha(3), beta(3), gamma(1), delta(1), epsilon(1). CF(0) has three main subunits: a, b and c.

It localises to the cell inner membrane. In terms of biological role, produces ATP from ADP in the presence of a proton gradient across the membrane. The polypeptide is ATP synthase epsilon chain (Saccharophagus degradans (strain 2-40 / ATCC 43961 / DSM 17024)).